Reading from the N-terminus, the 196-residue chain is Probable DNA-directed RNA polymerase subunit delta (196 aa).

The 68-residue stretch at Leu14 to Trp81 folds into the HTH HARE-type domain. A compositionally biased stretch (acidic residues) spans Asp119–Gly150. A disordered region spans residues Asp119–Asp196. The segment covering Ser151–Leu161 has biased composition (basic and acidic residues). Composition is skewed to acidic residues over residues Asp162 to Asp176 and Ser186 to Asp196.

The protein belongs to the RpoE family. In terms of assembly, RNAP is composed of a core of 2 alpha, a beta and a beta' subunits. The core is associated with a delta subunit and one of several sigma factors.

In terms of biological role, participates in both the initiation and recycling phases of transcription. In the presence of the delta subunit, RNAP displays an increased specificity of transcription, a decreased affinity for nucleic acids, and an increased efficiency of RNA synthesis because of enhanced recycling. This Ligilactobacillus salivarius (strain UCC118) (Lactobacillus salivarius) protein is Probable DNA-directed RNA polymerase subunit delta.